A 168-amino-acid polypeptide reads, in one-letter code: Protein-export protein SecB (168 aa).

Residues 1–10 (MSDQGTNNGE) are compositionally biased toward polar residues. The segment at 1–22 (MSDQGTNNGESGNGGAQNGEAP) is disordered.

The protein belongs to the SecB family. In terms of assembly, homotetramer, a dimer of dimers. One homotetramer interacts with 1 SecA dimer.

It localises to the cytoplasm. One of the proteins required for the normal export of preproteins out of the cell cytoplasm. It is a molecular chaperone that binds to a subset of precursor proteins, maintaining them in a translocation-competent state. It also specifically binds to its receptor SecA. This is Protein-export protein SecB from Parvibaculum lavamentivorans (strain DS-1 / DSM 13023 / NCIMB 13966).